The following is a 115-amino-acid chain: U3-lycotoxin-Ls1a (115 aa).

Positions 1-20 (MKFVLLFGVFLVTLFSYSSA) are cleaved as a signal peptide. The propeptide occupies 21 to 44 (EMLDDFGQADEDELLSLIEKEEAR). 4 disulfides stabilise this stretch: Cys-48-Cys-63, Cys-55-Cys-72, Cys-62-Cys-87, and Cys-74-Cys-85.

It belongs to the neurotoxin 19 (CSTX) family. 01 subfamily. As to expression, expressed by the venom gland.

Its subcellular location is the secreted. The sequence is that of U3-lycotoxin-Ls1a from Lycosa singoriensis (Wolf spider).